A 194-amino-acid polypeptide reads, in one-letter code: Molybdenum cofactor guanylyltransferase (194 aa).

Residues 12–14, K25, N53, D70, and D100 contribute to the GTP site; that span reads LAG. D100 is a Mg(2+) binding site.

It belongs to the MobA family. As to quaternary structure, monomer. Mg(2+) is required as a cofactor.

It localises to the cytoplasm. The enzyme catalyses Mo-molybdopterin + GTP + H(+) = Mo-molybdopterin guanine dinucleotide + diphosphate. Functionally, transfers a GMP moiety from GTP to Mo-molybdopterin (Mo-MPT) cofactor (Moco or molybdenum cofactor) to form Mo-molybdopterin guanine dinucleotide (Mo-MGD) cofactor. In Photobacterium profundum (strain SS9), this protein is Molybdenum cofactor guanylyltransferase.